The sequence spans 88 residues: Small ribosomal subunit protein uS15c (88 aa).

Belongs to the universal ribosomal protein uS15 family. As to quaternary structure, part of the 30S ribosomal subunit.

It localises to the plastid. It is found in the chloroplast. In Pinus koraiensis (Korean pine), this protein is Small ribosomal subunit protein uS15c (rps15).